We begin with the raw amino-acid sequence, 553 residues long: T-complex protein 1 subunit eta (553 aa).

Residue G41 participates in ADP binding. G41 lines the ATP pocket. D92 is a Mg(2+) binding site. The ADP site is built by G93, T94, T95, S96, S164, and S165. Position 93 (G93) interacts with ATP. Residue S96 coordinates ATP. ATP is bound by residues R398 and G409. ADP-binding residues include G409, E494, and R499. Residue R499 participates in ATP binding. Positions 523–553 (PRSTVDAPPGGRGRGRGQTPQPLRPRSVALS) are disordered. The span at 539–553 (GQTPQPLRPRSVALS) shows a compositional bias: low complexity.

Component of the chaperonin-containing T-complex (TRiC), a hexadecamer composed of two identical back-to-back stacked rings enclosing a protein folding chamber. Each ring is made up of eight different subunits: TCP1/CCT1, CCT2, CCT3, CCT4, CCT5, CCT6A/CCT6, CCT7, CCT8.

The protein resides in the cytoplasm. It catalyses the reaction ATP + H2O = ADP + phosphate + H(+). In terms of biological role, component of the chaperonin-containing T-complex (TRiC), a molecular chaperone complex that assists the folding of actin, tubulin and other proteins upon ATP hydrolysis. The protein is T-complex protein 1 subunit eta of Gallus gallus (Chicken).